Here is a 163-residue protein sequence, read N- to C-terminus: UPF0416 protein RBE_0909 (163 aa).

Belongs to the UPF0416 family.

The sequence is that of UPF0416 protein RBE_0909 from Rickettsia bellii (strain RML369-C).